A 216-amino-acid chain; its full sequence is Large ribosomal subunit protein uL3 (216 aa).

Glutamine 153 bears the N5-methylglutamine mark.

This sequence belongs to the universal ribosomal protein uL3 family. In terms of assembly, part of the 50S ribosomal subunit. Forms a cluster with proteins L14 and L19. Post-translationally, methylated by PrmB.

In terms of biological role, one of the primary rRNA binding proteins, it binds directly near the 3'-end of the 23S rRNA, where it nucleates assembly of the 50S subunit. In Burkholderia multivorans (strain ATCC 17616 / 249), this protein is Large ribosomal subunit protein uL3.